Reading from the N-terminus, the 380-residue chain is MKVFRQQLEQLGAQNQYRSIPDLIHQGRYITRENRKMLNMSSNDYLGLASDENLRRSFLQQYGGNFPSFTSSSSRLLTGNFPIYTDLEELVAQRFQRESALLFNSGYHANLGILPALTTTKSLILADKFVHASMIDGIRLSRCAFFRYRHNDYEHLKNLLEKNVGKFDRTFIVTESVFSMDGDVADLKQLVQLKKQFPNTYLYVDEAHAIGVYGQNGLGIAERDNLIAEIDLLVGTFGKALASVGAYAVCNQVLKECLINQMRPLIFSTALPPFNVAWTYFIFERLPQFSKERSHLEQLSAFLRREVAHRTQIMPSETCIVPYILGGNEATLAKAEYLQGQGYYCLPIRPPTVPKNTSRIRLSLTADMTTDEVRQFAACL.

Residue arginine 18 coordinates substrate. 106-107 (GY) is a pyridoxal 5'-phosphate binding site. Histidine 131 contacts substrate. Pyridoxal 5'-phosphate is bound by residues serine 179, 205 to 208 (DEAH), and 236 to 239 (TFGK). Lysine 239 bears the N6-(pyridoxal phosphate)lysine mark. Threonine 352 contributes to the substrate binding site.

The protein belongs to the class-II pyridoxal-phosphate-dependent aminotransferase family. BioF subfamily. As to quaternary structure, homodimer. Pyridoxal 5'-phosphate is required as a cofactor.

The catalysed reaction is 6-carboxyhexanoyl-[ACP] + L-alanine + H(+) = (8S)-8-amino-7-oxononanoate + holo-[ACP] + CO2. It participates in cofactor biosynthesis; biotin biosynthesis. Catalyzes the decarboxylative condensation of pimeloyl-[acyl-carrier protein] and L-alanine to produce 8-amino-7-oxononanoate (AON), [acyl-carrier protein], and carbon dioxide. The sequence is that of Putative 8-amino-7-oxononanoate synthase (bioF) from Neisseria gonorrhoeae (strain NCCP11945).